A 318-amino-acid polypeptide reads, in one-letter code: Tumor necrosis factor ligand superfamily member 11 (318 aa).

The Cytoplasmic portion of the chain corresponds to methionine 1–arginine 47. Positions arginine 13–proline 41 are disordered. The span at histidine 31 to proline 41 shows a compositional bias: pro residues. Residues phenylalanine 48 to phenylalanine 68 form a helical; Signal-anchor for type II membrane protein membrane-spanning segment. The Extracellular segment spans residues leucine 69–aspartate 318. In terms of domain architecture, THD spans proline 165–valine 314. 2 N-linked (GlcNAc...) asparagine glycosylation sites follow: asparagine 199 and asparagine 264.

This sequence belongs to the tumor necrosis factor family. Homotrimer. Interacts with TNFRSF11A and TNFRSF11B. Interacts with FBN1 (via N-terminal domain) in a Ca(+2)-dependent manner. Interacts with TNFAIP6 (via both Link and CUB domains). The soluble form derives from the membrane form by proteolytic processing. In terms of tissue distribution, highly expressed in thymus and bone tissues.

The protein localises to the cell membrane. The protein resides in the secreted. Functionally, cytokine that binds to TNFRSF11B/OPG and to TNFRSF11A/RANK. Osteoclast differentiation and activation factor. Augments the ability of dendritic cells to stimulate naive T-cell proliferation. May be an important regulator of interactions between T-cells and dendritic cells and may play a role in the regulation of the T-cell-dependent immune response. May also play an important role in enhanced bone-resorption in humoral hypercalcemia of malignancy. Induces osteoclastogenesis by activating multiple signaling pathways in osteoclast precursor cells, chief among which is induction of long lasting oscillations in the intracellular concentration of Ca (2+) resulting in the activation of NFATC1, which translocates to the nucleus and induces osteoclast-specific gene transcription to allow differentiation of osteoclasts. During osteoclast differentiation, in a TMEM64 and ATP2A2-dependent manner induces activation of CREB1 and mitochondrial ROS generation necessary for proper osteoclast generation. The chain is Tumor necrosis factor ligand superfamily member 11 (Tnfsf11) from Rattus norvegicus (Rat).